The chain runs to 362 residues: Phosphoserine aminotransferase (362 aa).

Positions 9 and 42 each coordinate L-glutamate. Residues 76 to 77 (GR), tryptophan 102, threonine 153, aspartate 174, and glutamine 197 contribute to the pyridoxal 5'-phosphate site. An N6-(pyridoxal phosphate)lysine modification is found at lysine 198. 239–240 (NT) is a binding site for pyridoxal 5'-phosphate.

The protein belongs to the class-V pyridoxal-phosphate-dependent aminotransferase family. SerC subfamily. Homodimer. Requires pyridoxal 5'-phosphate as cofactor.

It is found in the cytoplasm. The catalysed reaction is O-phospho-L-serine + 2-oxoglutarate = 3-phosphooxypyruvate + L-glutamate. It catalyses the reaction 4-(phosphooxy)-L-threonine + 2-oxoglutarate = (R)-3-hydroxy-2-oxo-4-phosphooxybutanoate + L-glutamate. The protein operates within amino-acid biosynthesis; L-serine biosynthesis; L-serine from 3-phospho-D-glycerate: step 2/3. Its pathway is cofactor biosynthesis; pyridoxine 5'-phosphate biosynthesis; pyridoxine 5'-phosphate from D-erythrose 4-phosphate: step 3/5. Catalyzes the reversible conversion of 3-phosphohydroxypyruvate to phosphoserine and of 3-hydroxy-2-oxo-4-phosphonooxybutanoate to phosphohydroxythreonine. The protein is Phosphoserine aminotransferase of Citrobacter koseri (strain ATCC BAA-895 / CDC 4225-83 / SGSC4696).